Consider the following 292-residue polypeptide: Proteasome subunit beta 2 (292 aa).

Residues 1–59 constitute a propeptide, removed in mature form; by autocatalysis; that stretch reads MTVDRAPRITDGDTRLSFGSNLSSFSEYLRVHAPEHLPQNRFADTGGVVMGGGDVAPHG. Residue Thr60 is the Nucleophile of the active site.

This sequence belongs to the peptidase T1B family. In terms of assembly, the 20S proteasome core is composed of 14 alpha and 14 beta subunits that assemble into four stacked heptameric rings, resulting in a barrel-shaped structure. The two inner rings, each composed of seven catalytic beta subunits, are sandwiched by two outer rings, each composed of seven alpha subunits. All four combinations of alpha- and beta-subunits (beta2-alpha1, beta2-alpha2, beta1-alpha2 and beta1-alpha1) yield fully assembled and proteolytically active proteasomes. The catalytic chamber with the active sites is on the inside of the barrel. Has probably a gated structure, the ends of the cylinder being occluded by the N-termini of the alpha-subunits. Is likely capped by the proteasome-associated ATPase, ARC.

The protein localises to the cytoplasm. It catalyses the reaction Cleavage of peptide bonds with very broad specificity.. Its pathway is protein degradation; proteasomal Pup-dependent pathway. The formation of the proteasomal ATPase ARC-20S proteasome complex, likely via the docking of the C-termini of ARC into the intersubunit pockets in the alpha-rings, may trigger opening of the gate for substrate entry. Interconversion between the open-gate and close-gate conformations leads to a dynamic regulation of the 20S proteasome proteolysis activity. In terms of biological role, component of the proteasome core, a large protease complex with broad specificity involved in protein degradation. The R.erythropolis proteasomes are able to cleave oligopeptides after Tyr, Phe and Leu, very poorly after Arg but not after Glu. Thus, displays chymotrypsin-like activity, low trypsin-like activity but no caspase-like activity. This chain is Proteasome subunit beta 2, found in Rhodococcus erythropolis (Arthrobacter picolinophilus).